We begin with the raw amino-acid sequence, 189 residues long: Elongation factor P-like protein (189 aa).

Belongs to the elongation factor P family.

This is Elongation factor P-like protein from Vibrio atlanticus (strain LGP32) (Vibrio splendidus (strain Mel32)).